Consider the following 454-residue polypeptide: N-myc 2 proto-oncogene protein (454 aa).

Disordered stretches follow at residues Glu133 to Thr166, Ala231 to Glu270, and Ser326 to Arg374. Acidic residues predominate over residues Ala256–Glu270. Basic and acidic residues predominate over residues Arg363–Arg374. Residues Val371–Leu423 enclose the bHLH domain. Residues Leu423–Leu444 form a leucine-zipper region.

In terms of assembly, efficient DNA binding requires dimerization with another bHLH protein.

The protein resides in the nucleus. The chain is N-myc 2 proto-oncogene protein (N-MYC2) from Otospermophilus beecheyi (California ground squirrel).